The following is a 632-amino-acid chain: Fem-3 mRNA-binding factor 2 (632 aa).

Basic residues predominate over residues 1–11 (MDQSKMRRTNQ). Positions 1 to 37 (MDQSKMRRTNQFRKTSQKPPSTGIDSYPTPAQSPMAQ) are disordered. Polar residues predominate over residues 12 to 35 (FRKTSQKPPSTGIDSYPTPAQSPM). One can recognise a PUM-HD domain in the interval 162–566 (TRSNNVLPTW…KMIETLANLR (405 aa)). Pumilio repeat units lie at residues 187-225 (EVLD…QLFE), 226-264 (QVIG…GYTK), 271-307 (NFIS…KLVQ), 308-332 (ALPR…QKVV), 345-384 (DFVA…DLTS), 400-436 (SVTN…CIIE), 438-473 (CLMR…EMMD), and 484-521 (DTGK…RQTK). The interval 609 to 632 (MLEPRSNKSSVSVKFSSSGSHGDD) is disordered. Positions 615-632 (NKSSVSVKFSSSGSHGDD) are enriched in low complexity.

In terms of assembly, interacts (via C-terminus) with gld-3 isoform A in an RNA-independent manner. Interacts with dlc-1, and is required for the localization of fbf-2 to P granules. Interacts (via RNA-binding domain) with lst-1, probably displaces bound auto-inhibitory C-terminal tail and alters its RNA-binding affinity. As to expression, expressed specifically in the germline (at protein level).

It localises to the cytoplasm. The protein resides in the cytoplasmic granule. Functionally, RNA-binding protein that binds to the consensus sequence 5'-UGUGCCAUA-3' in mRNA 3'-UTRs. Involved in the control of stem cells and sex determination in the C.elegans hermaphrodite germline. May also play a role in the hermaphrodite germline proliferation and oogenesis. By binding to the 3'-UTR, represses phosphatase lip-1 expression in the distal part of the germline mitotic zone. Binds specifically to the regulatory region of fem-3 3'-UTR and mediates the sperm/oocyte switch. Negatively regulates gld-3 expression possibly by directly binding to two sites within the gld-3 isoform b 3'-UTR. Suppresses germline tumor formation by preventing the dedifferentiation of secondary spermatocytes. C-terminal disordered region probably auto-inhibits RNA binding; auto-inhibition may be reversed by interaction with lst-1. This is Fem-3 mRNA-binding factor 2 from Caenorhabditis elegans.